The chain runs to 310 residues: Formyltetrahydrofolate deformylase (310 aa).

The segment at 1 to 30 (MGKGSMTAHATPNEPDYPPPPGGPPPPADI) is disordered. Residues 15-28 (PDYPPPPGGPPPPA) are compositionally biased toward pro residues. The ACT domain occupies 32–108 (RLLLRCHDRP…VADKFGIDYR (77 aa)). Asp-255 is a catalytic residue.

The protein belongs to the PurU family.

The enzyme catalyses (6R)-10-formyltetrahydrofolate + H2O = (6S)-5,6,7,8-tetrahydrofolate + formate + H(+). It participates in purine metabolism; IMP biosynthesis via de novo pathway; formate from 10-formyl-5,6,7,8-tetrahydrofolate: step 1/1. Functionally, catalyzes the hydrolysis of 10-formyltetrahydrofolate (formyl-FH4) to formate and tetrahydrofolate (FH4). This Mycobacterium bovis (strain ATCC BAA-935 / AF2122/97) protein is Formyltetrahydrofolate deformylase.